Reading from the N-terminus, the 192-residue chain is Flavin prenyltransferase UbiX (192 aa).

Residues 10-12 (GAS), serine 36, 92-95 (SMTT), and arginine 127 each bind FMN. Tyrosine 157 and lysine 173 together coordinate dimethylallyl phosphate.

It belongs to the UbiX/PAD1 family.

The enzyme catalyses dimethylallyl phosphate + FMNH2 = prenylated FMNH2 + phosphate. Flavin prenyltransferase that catalyzes the synthesis of the prenylated FMN cofactor (prenyl-FMN) for 4-hydroxy-3-polyprenylbenzoic acid decarboxylase UbiD. The prenyltransferase is metal-independent and links a dimethylallyl moiety from dimethylallyl monophosphate (DMAP) to the flavin N5 and C6 atoms of FMN. The chain is Flavin prenyltransferase UbiX from Chlamydia pneumoniae (Chlamydophila pneumoniae).